A 137-amino-acid chain; its full sequence is Acyl carrier protein 4, chloroplastic (137 aa).

A chloroplast-targeting transit peptide spans 1–48 (MASLSTTSLSFKAPSTTISQVLRKASSSQSVTFGRFTSSTKSLRLQIS). One can recognise a Carrier domain in the interval 53–128 (AETVQKVSDI…EAADLIEDLV (76 aa)). Residue Ser-88 is modified to O-(pantetheine 4'-phosphoryl)serine.

This sequence belongs to the acyl carrier protein (ACP) family. In terms of processing, 4'-phosphopantetheine is transferred from CoA to a specific serine of apo-ACP by acpS. This modification is essential for activity because fatty acids are bound in thioester linkage to the sulfhydryl of the prosthetic group.

The protein resides in the plastid. Its subcellular location is the chloroplast. Its function is as follows. Carrier of the growing fatty acid chain in fatty acid biosynthesis that plays a major role in the biosynthesis of fatty acids in leaves. Required for the biosynthesis of chloroplast photosynthetic membrane lipids such as monogalactosyldiacylglycerol, digalactosyldiacylglycerol and phosphatidylglycerol. Is essential for the biosynthesis of the cuticular wax and cutin polymers in leaves, and for the establishment of systemic acquired resistance (SAR). In Arabidopsis thaliana (Mouse-ear cress), this protein is Acyl carrier protein 4, chloroplastic (ACP4).